A 737-amino-acid chain; its full sequence is Catalase-peroxidase (737 aa).

The disordered stretch occupies residues 1 to 32 (MSKENMSNEGKCPFNHGAAGTNQSSGRGTSNK). Residues 20 to 32 (GTNQSSGRGTSNK) show a composition bias toward polar residues. A cross-link (tryptophyl-tyrosyl-methioninium (Trp-Tyr) (with M-252)) is located at residues 103–226 (WHSAGTYRTA…LAAVQMGLIY (124 aa)). H104 functions as the Proton acceptor in the catalytic mechanism. The tryptophyl-tyrosyl-methioninium (Tyr-Met) (with W-103) cross-link spans 226 to 252 (YVNPEGPEGKPDTLASARDIRDTFGRM). A heme b-binding site is contributed by H267.

Belongs to the peroxidase family. Peroxidase/catalase subfamily. Homodimer or homotetramer. It depends on heme b as a cofactor. Formation of the three residue Trp-Tyr-Met cross-link is important for the catalase, but not the peroxidase activity of the enzyme.

The catalysed reaction is H2O2 + AH2 = A + 2 H2O. It carries out the reaction 2 H2O2 = O2 + 2 H2O. Bifunctional enzyme with both catalase and broad-spectrum peroxidase activity. In Marinomonas sp. (strain MWYL1), this protein is Catalase-peroxidase.